The following is a 108-amino-acid chain: uncharacterized protein (108 aa).

Residues 15-37 form a helical membrane-spanning segment; the sequence is SYYFYIFWNFFLPMFIVYRGFGL.

The protein localises to the membrane. This is an uncharacterized protein from Archaeoglobus fulgidus (strain ATCC 49558 / DSM 4304 / JCM 9628 / NBRC 100126 / VC-16).